The primary structure comprises 188 residues: V-type ATP synthase subunit E (188 aa).

The protein belongs to the V-ATPase E subunit family.

Functionally, produces ATP from ADP in the presence of a proton gradient across the membrane. In Thermus thermophilus (strain ATCC BAA-163 / DSM 7039 / HB27), this protein is V-type ATP synthase subunit E.